Reading from the N-terminus, the 447-residue chain is ATP-dependent protease ATPase subunit HslU (447 aa).

ATP contacts are provided by residues Ile17, 59-64, Asp256, Glu321, and Arg393; that span reads GVGKTE.

Belongs to the ClpX chaperone family. HslU subfamily. As to quaternary structure, a double ring-shaped homohexamer of HslV is capped on each side by a ring-shaped HslU homohexamer. The assembly of the HslU/HslV complex is dependent on binding of ATP.

It is found in the cytoplasm. Its function is as follows. ATPase subunit of a proteasome-like degradation complex; this subunit has chaperone activity. The binding of ATP and its subsequent hydrolysis by HslU are essential for unfolding of protein substrates subsequently hydrolyzed by HslV. HslU recognizes the N-terminal part of its protein substrates and unfolds these before they are guided to HslV for hydrolysis. In Pseudomonas entomophila (strain L48), this protein is ATP-dependent protease ATPase subunit HslU.